The chain runs to 568 residues: 2-succinyl-5-enolpyruvyl-6-hydroxy-3-cyclohexene-1-carboxylate synthase (568 aa).

Belongs to the TPP enzyme family. MenD subfamily. As to quaternary structure, homodimer. The cofactor is Mg(2+). Mn(2+) serves as cofactor. It depends on thiamine diphosphate as a cofactor.

It carries out the reaction isochorismate + 2-oxoglutarate + H(+) = 5-enolpyruvoyl-6-hydroxy-2-succinyl-cyclohex-3-ene-1-carboxylate + CO2. It participates in quinol/quinone metabolism; 1,4-dihydroxy-2-naphthoate biosynthesis; 1,4-dihydroxy-2-naphthoate from chorismate: step 2/7. Its pathway is quinol/quinone metabolism; menaquinone biosynthesis. Its function is as follows. Catalyzes the thiamine diphosphate-dependent decarboxylation of 2-oxoglutarate and the subsequent addition of the resulting succinic semialdehyde-thiamine pyrophosphate anion to isochorismate to yield 2-succinyl-5-enolpyruvyl-6-hydroxy-3-cyclohexene-1-carboxylate (SEPHCHC). The protein is 2-succinyl-5-enolpyruvyl-6-hydroxy-3-cyclohexene-1-carboxylate synthase of Actinobacillus succinogenes (strain ATCC 55618 / DSM 22257 / CCUG 43843 / 130Z).